The chain runs to 89 residues: Small ribosomal subunit protein uS15 (89 aa).

Residues 1–25 are disordered; it reads MSLSAEQKGEIVKKHARTASDTGSP.

This sequence belongs to the universal ribosomal protein uS15 family. Part of the 30S ribosomal subunit. Forms a bridge to the 50S subunit in the 70S ribosome, contacting the 23S rRNA.

Functionally, one of the primary rRNA binding proteins, it binds directly to 16S rRNA where it helps nucleate assembly of the platform of the 30S subunit by binding and bridging several RNA helices of the 16S rRNA. Its function is as follows. Forms an intersubunit bridge (bridge B4) with the 23S rRNA of the 50S subunit in the ribosome. This is Small ribosomal subunit protein uS15 from Alkalilimnicola ehrlichii (strain ATCC BAA-1101 / DSM 17681 / MLHE-1).